A 267-amino-acid polypeptide reads, in one-letter code: NAD kinase (267 aa).

Aspartate 45 (proton acceptor) is an active-site residue. NAD(+)-binding positions include 45–46 (DG), 123–124 (NE), arginine 149, aspartate 151, alanine 186, and asparagine 226.

The protein belongs to the NAD kinase family. Requires a divalent metal cation as cofactor.

The protein localises to the cytoplasm. It carries out the reaction NAD(+) + ATP = ADP + NADP(+) + H(+). Its function is as follows. Involved in the regulation of the intracellular balance of NAD and NADP, and is a key enzyme in the biosynthesis of NADP. Catalyzes specifically the phosphorylation on 2'-hydroxyl of the adenosine moiety of NAD to yield NADP. This is NAD kinase from Shouchella clausii (strain KSM-K16) (Alkalihalobacillus clausii).